The following is a 406-amino-acid chain: Imidazolonepropionase (406 aa).

Fe(3+)-binding residues include H72 and H74. H72 and H74 together coordinate Zn(2+). Residues R81, Y144, and H177 each contribute to the 4-imidazolone-5-propanoate site. Residue Y144 coordinates N-formimidoyl-L-glutamate. Fe(3+) is bound at residue H242. A Zn(2+)-binding site is contributed by H242. Q245 contributes to the 4-imidazolone-5-propanoate binding site. D317 contacts Fe(3+). D317 serves as a coordination point for Zn(2+). N319 and G321 together coordinate N-formimidoyl-L-glutamate. T322 contributes to the 4-imidazolone-5-propanoate binding site.

The protein belongs to the metallo-dependent hydrolases superfamily. HutI family. Zn(2+) is required as a cofactor. It depends on Fe(3+) as a cofactor.

The protein resides in the cytoplasm. It carries out the reaction 4-imidazolone-5-propanoate + H2O = N-formimidoyl-L-glutamate. It functions in the pathway amino-acid degradation; L-histidine degradation into L-glutamate; N-formimidoyl-L-glutamate from L-histidine: step 3/3. Catalyzes the hydrolytic cleavage of the carbon-nitrogen bond in imidazolone-5-propanoate to yield N-formimidoyl-L-glutamate. It is the third step in the universal histidine degradation pathway. This is Imidazolonepropionase from Yersinia pseudotuberculosis serotype O:1b (strain IP 31758).